The following is an 853-amino-acid chain: DNA mismatch repair protein MutS (853 aa).

614–621 provides a ligand contact to ATP; sequence GPNMGGKS.

Belongs to the DNA mismatch repair MutS family.

Its function is as follows. This protein is involved in the repair of mismatches in DNA. It is possible that it carries out the mismatch recognition step. This protein has a weak ATPase activity. This Shigella dysenteriae serotype 1 (strain Sd197) protein is DNA mismatch repair protein MutS.